The chain runs to 208 residues: V-type ATP synthase subunit D (208 aa).

It belongs to the V-ATPase D subunit family.

In terms of biological role, produces ATP from ADP in the presence of a proton gradient across the membrane. The protein is V-type ATP synthase subunit D of Streptococcus pyogenes serotype M3 (strain ATCC BAA-595 / MGAS315).